Here is a 367-residue protein sequence, read N- to C-terminus: Peptide chain release factor 2 (367 aa).

Gln254 carries the post-translational modification N5-methylglutamine.

Belongs to the prokaryotic/mitochondrial release factor family. Post-translationally, methylated by PrmC. Methylation increases the termination efficiency of RF2.

It localises to the cytoplasm. In terms of biological role, peptide chain release factor 2 directs the termination of translation in response to the peptide chain termination codons UGA and UAA. The protein is Peptide chain release factor 2 of Janthinobacterium sp. (strain Marseille) (Minibacterium massiliensis).